The sequence spans 603 residues: Ribosome-inactivating protein PMRIPt (603 aa).

The signal sequence occupies residues 1-39 (MRVVAGILYIVVMAICGLGIQGGTLQDYPSVYFQDSTLQ). N-linked (GlcNAc...) asparagine glycosylation is found at N74 and N168. E208 is a catalytic residue. Intrachain disulfides connect C297-C335, C351-C370, and C392-C409. 2 consecutive Ricin B-type lectin domains span residues 338–466 (GEPT…VGDD) and 467–593 (VEPI…WMTM). One copy of the 1-alpha repeat lies at 348-388 (DGLCMDVRNESNNDGIPIQLWPCGAQRNQQWTFHTDGTIQS). Residues N356 and N408 are each glycosylated (N-linked (GlcNAc...) asparagine). The stretch at 389-430 (MGKCMTSNGYHPGDYVMIFNCSTAPVPDATKWVVSIDGSITN) is one 1-beta repeat. A 1-gamma repeat occupies 433 to 466 (SGLVLTAPQAAQTTILLVVRNTHSAKQGRSVGDD). A 2-alpha repeat occupies 478-516 (KYMCLQGNNENNTRVWLEDCAVDRPQQWWALYSDGTIRV). 2 disulfide bridges follow: C481-C497 and C523-C540. N488 carries an N-linked (GlcNAc...) asparagine glycan. The 2-beta repeat unit spans residues 520 to 558 (RSLCVTSDGHSSRDAIIILTCDGGINQRLVFNTDGTILN). The 2-gamma repeat unit spans residues 561–597 (AQLVMDVRQSNVALRQIILYQPTGNPNQQWMTMITRT).

Belongs to the ribosome-inactivating protein family. Type 2 RIP subfamily. Tetramer of four pairs of disulfide bound A-B chains. Post-translationally, the precursor is processed in two chains, A and B, that are linked by a disulfide bond. Glycosylated. Expressed in rhizome and more abundantly in leaves (at protein level).

It catalyses the reaction Endohydrolysis of the N-glycosidic bond at one specific adenosine on the 28S rRNA.. Its activity is regulated as follows. Strongly inhibited by asialofetuin and asialomucin. Functionally, galNAc-specific agglutinin. Behaves as a type-2 ribosome-inactivating protein. Inhibits mammalian ribosomes. The A chain is responsible for inhibiting protein synthesis through the catalytic inactivation of 60S ribosomal subunits by removing adenine from position 4,324 of 28S rRNA. The B chain binds to cell receptors and probably facilitates the entry into the cell of the A chain; B chains are also responsible for cell agglutination (lectin activity). Involved in plant defense against insects. Has very low cytotoxic activity against the human tumor cell lines CEM and Molt4. The chain is Ribosome-inactivating protein PMRIPt from Polygonatum multiflorum (Solomon's seal).